Here is a 445-residue protein sequence, read N- to C-terminus: DDB1- and CUL4-associated factor 13 (445 aa).

Lys-49 carries the N6-acetyllysine modification. WD repeat units follow at residues 64–104, 107–146, 149–191, 194–234, 236–276, 280–319, and 323–362; these read GHRD…CIRT, AHEGFVRGICTRFCGTSFFTVGDDKTVKQWKMDGPGYGDE, PLHT…PVCS, WGFD…PLKK, ILDM…TPVM, DHVSAVLDVDYSPTGKEFVSASFDKSIRIFPVDKSRSREV, and KRMQHVICVKWTSDSKYIMCGSDEMNIRLWKANASEKLGV. Residues 353 to 441 form a required for nucleolar location region; it reads KANASEKLGV…IVSEKKKHVV (89 aa).

Belongs to the WD repeat DCAF13/WDSOF1 family. In terms of assembly, part of the small subunit (SSU) processome, composed of more than 70 proteins and the RNA chaperone small nucleolar RNA (snoRNA) U3. Component of the DCX(DCAF13) E3 ubiquitin ligase complex, at least composed of CUL4 (CUL4A or CUL4B), DDB1, DCAF13 and RBX1. Interacts (via WD40 domain) with DDB1. Interacts with ESR1 and LATS1.

The protein localises to the nucleus. It is found in the nucleolus. The protein operates within protein modification; protein ubiquitination. In terms of biological role, part of the small subunit (SSU) processome, first precursor of the small eukaryotic ribosomal subunit. During the assembly of the SSU processome in the nucleolus, many ribosome biogenesis factors, an RNA chaperone and ribosomal proteins associate with the nascent pre-rRNA and work in concert to generate RNA folding, modifications, rearrangements and cleavage as well as targeted degradation of pre-ribosomal RNA by the RNA exosome. Participates in the 18S rRNA processing in growing oocytes, being essential for oocyte nonsurrounded nucleolus (NSN) to surrounded nucleolus (SN) transition. Functionally, substrate-recognition component of a DCX (DDB1-CUL4-X-box) E3 ubiquitin-protein ligase complex that plays a key role in embryo preimplantation and is required for normal meiotic cycle progression in oocytes. Acts as a maternal factor that regulates oocyte and zygotic chromatin tightness during maternal to zygotic transition. Also involved in the transformation of the endometrium into the decidua, known as decidualization, providing a solid foundation for implantation of blastocysts. Recognizes the histone methyltransferases SUV39H1 and SUV39H2 and directs them to polyubiquitination and proteasomal degradation, which facilitates the H3K9me3 removal and early zygotic gene expression, essential steps for progressive genome reprogramming and the establishment of pluripotency during preimplantation embryonic development. Supports the spindle assembly and chromosome condensation during oocyte meiotic division by targeting the polyubiquitination and degradation of PTEN, a lipid phosphatase that inhibits PI3K pathway as well as oocyte growth and maturation. Targets PMP22 for polyubiquitination and proteasomal degradation. The chain is DDB1- and CUL4-associated factor 13 (DCAF13) from Pongo abelii (Sumatran orangutan).